Here is a 195-residue protein sequence, read N- to C-terminus: Pyridoxal 5'-phosphate synthase subunit PdxT (195 aa).

46–48 (GES) lines the L-glutamine pocket. The active-site Nucleophile is Cys-78. Residues Arg-105 and 133 to 134 (IR) contribute to the L-glutamine site. Active-site charge relay system residues include His-169 and Glu-171.

This sequence belongs to the glutaminase PdxT/SNO family. In the presence of PdxS, forms a dodecamer of heterodimers. Only shows activity in the heterodimer.

It catalyses the reaction aldehydo-D-ribose 5-phosphate + D-glyceraldehyde 3-phosphate + L-glutamine = pyridoxal 5'-phosphate + L-glutamate + phosphate + 3 H2O + H(+). It carries out the reaction L-glutamine + H2O = L-glutamate + NH4(+). It functions in the pathway cofactor biosynthesis; pyridoxal 5'-phosphate biosynthesis. Catalyzes the hydrolysis of glutamine to glutamate and ammonia as part of the biosynthesis of pyridoxal 5'-phosphate. The resulting ammonia molecule is channeled to the active site of PdxS. This chain is Pyridoxal 5'-phosphate synthase subunit PdxT, found in Shouchella clausii (strain KSM-K16) (Alkalihalobacillus clausii).